Consider the following 416-residue polypeptide: Cyclin-L1-1 (416 aa).

Residues 286–416 form a disordered region; the sequence is KCTAGSANND…DSSKDRRRHH (131 aa). 4 stretches are compositionally biased toward basic and acidic residues: residues 304–315, 328–374, 384–393, and 401–410; these read PHEKATDSKKSG, SYER…DKLK, RLKDSGGHSD, and RDRDYRDSSK.

This sequence belongs to the cyclin family. Cyclin L subfamily. In terms of assembly, forms a complex with CDKG1. Interacts with MOS4 and associates with the spliceosome.

It is found in the nucleus. Its function is as follows. Cognate cyclin for CDKG1. Required for synapsis and male meiosis, and for the proper splicing of specific resistance (R) genes. Involved in regulation of DNA methylation and transcriptional silencing. This is Cyclin-L1-1 (CYCL1-1) from Arabidopsis thaliana (Mouse-ear cress).